A 1217-amino-acid polypeptide reads, in one-letter code: DNA-directed RNA polymerase subunit beta' (1217 aa).

Cys-60, Cys-62, Cys-75, and Cys-78 together coordinate Zn(2+). Residues Asp-449, Asp-451, and Asp-453 each coordinate Mg(2+). Zn(2+) contacts are provided by Cys-821, Cys-895, Cys-902, and Cys-905.

This sequence belongs to the RNA polymerase beta' chain family. In terms of assembly, the RNAP catalytic core consists of 2 alpha, 1 beta, 1 beta' and 1 omega subunit. When a sigma factor is associated with the core the holoenzyme is formed, which can initiate transcription. Mg(2+) is required as a cofactor. It depends on Zn(2+) as a cofactor.

The catalysed reaction is RNA(n) + a ribonucleoside 5'-triphosphate = RNA(n+1) + diphosphate. DNA-dependent RNA polymerase catalyzes the transcription of DNA into RNA using the four ribonucleoside triphosphates as substrates. This Lactobacillus acidophilus (strain ATCC 700396 / NCK56 / N2 / NCFM) protein is DNA-directed RNA polymerase subunit beta'.